Consider the following 48-residue polypeptide: Small, acid-soluble spore protein N (48 aa).

The segment at 1–48 is disordered; it reads MGINKKDGQPQYAPSHLGTKPVKYKRNKGEKFHDKSNGHPIVMQTKGE. Positions 27–37 are enriched in basic and acidic residues; sequence NKGEKFHDKSN.

It belongs to the SspN family.

It localises to the spore core. The chain is Small, acid-soluble spore protein N from Bacillus velezensis (strain DSM 23117 / BGSC 10A6 / LMG 26770 / FZB42) (Bacillus amyloliquefaciens subsp. plantarum).